Here is a 56-residue protein sequence, read N- to C-terminus: Ferredoxin (56 aa).

4Fe-4S ferredoxin-type domains lie at 2 to 28 (AYKI…SQGD) and 29 to 56 (SIFV…PVQE). The [4Fe-4S] cluster site is built by cysteine 9, cysteine 12, cysteine 15, cysteine 19, cysteine 38, cysteine 41, cysteine 44, and cysteine 48.

The cofactor is [4Fe-4S] cluster.

Functionally, ferredoxins are iron-sulfur proteins that transfer electrons in a wide variety of metabolic reactions. The sequence is that of Ferredoxin from Clostridium pasteurianum.